We begin with the raw amino-acid sequence, 128 residues long: Infection structure-specific protein 56 (128 aa).

2 stretches are compositionally biased toward polar residues: residues 27–36 and 87–101; these read HATYPQSQPH and TSISASQHQRQDSQS. Disordered regions lie at residues 27 to 48 and 86 to 128; these read HATYPQSQPHATKRSFGPAVPS and GTSI…STSA. A compositionally biased stretch (basic and acidic residues) spans 115–128; that stretch reads KDAKKELKDPSTSA.

Its function is as follows. General role in the development of germlings including formation of the infection structures. In Uromyces appendiculatus (Rust fungus), this protein is Infection structure-specific protein 56 (INF56).